The chain runs to 156 residues: Type II secretion system core protein G (156 aa).

The propeptide at 1 to 22 (MQQSQRGCGQNSYGQSGYRQRG) is leader sequence. N-methylphenylalanine is present on Phe-23. The chain crosses the membrane as a helical span at residues 23 to 43 (FTLLEIMVVIVILGVLASLVV).

It belongs to the GSP G family. Type II secretion system is composed of four main components: the outer membrane complex, the inner membrane complex, the cytoplasmic secretion ATPase and the periplasm-spanning pseudopilus. Forms homomultimers. In terms of processing, cleaved by the prepilin peptidase. Methylated by prepilin peptidase at the amino group of the N-terminal phenylalanine once the leader sequence is cleaved.

Its subcellular location is the cell inner membrane. Functionally, core component of the type II secretion system required for the energy-dependent secretion of extracellular factors such as proteases and toxins from the periplasm. Pseudopilin (pilin-like) protein that polymerizes to form the pseudopilus. Further polymerization triggers pseudopilus growth. The protein is Type II secretion system core protein G (outG) of Pectobacterium carotovorum subsp. carotovorum (Erwinia carotovora subsp. carotovora).